A 1377-amino-acid polypeptide reads, in one-letter code: Clustered mitochondria protein homolog (1377 aa).

Residues 1-61 (MLKSIQRNGK…GETKKKSDSE (61 aa)) are disordered. The 243-residue stretch at 353 to 595 (RAEDTFSSKL…RTFPPDVNFL (243 aa)) folds into the Clu domain. The TPR 1 repeat unit spans residues 519–552 (VYGSIDFGKTVLSHEKYLELLNNAGKHLKIYPHS). Disordered stretches follow at residues 651 to 700 (NKRQ…VPKV) and 886 to 917 (DVLTKSGSSGKQQRKQNKRTAAGGGKGGKSSF). Positions 655 to 690 (QKQDTPKEETKAIEPAAKEDSANNNKEEPAAKKGEP) are enriched in basic and acidic residues. Positions 886-896 (DVLTKSGSSGK) are enriched in polar residues. TPR repeat units lie at residues 1022-1055 (AYNFYTTGQTKIQQGYFKDGYDLISEALNLLNNV), 1148-1181 (ALLDSNISLILHAVGEYELSLRFLEHALALNIKY), and 1183-1216 (GEKSLKVAVSYHLVARTQSCMGDFRSALNNEKET). Positions 1310–1377 (KEGGAAGESS…SKANPVASSS (68 aa)) are disordered. A compositionally biased stretch (low complexity) spans 1364–1377 (ASSSSKANPVASSS).

The protein belongs to the CLU family.

The protein localises to the cytoplasm. Functionally, mRNA-binding protein involved in proper cytoplasmic distribution of mitochondria. This is Clustered mitochondria protein homolog from Culex quinquefasciatus (Southern house mosquito).